The following is a 487-amino-acid chain: MGSGIMTETLTDSWLVGLLCLVLGFLLLQLYKLVWGASSRAYKLPPGSTGWPLIGETISFFRGINSTAQPRQFIQEREQRYGEIFRSNLFGRSRIVVSVDPEFNKHVLQHEGRQFQANYPKPLRNLIGKYGLLSVHGDLQRKLHGAAVNLLRFERLSVDFMEDIQNLLHITLAKWEAKRDIHLQEECHQLVLNLMAKQLLDLSPSKDTEEICEAFGHFSEALLAVPIKIPGTKYARGFKAREFLIKKIYESIEDRRQHPEAVHNDLLTKLLKEDSFSEEIIADFILFLLFAGHETSSRSMSFAIKFLTDCPRALEELKAEHDALLKRKGNLKNQKLNWDDYQSLKFTQCVIHETLRVGNFGPGVFRETKEDIKTKGGFVIPRGWTVYVFLTGTHLDEKYHSSALKFDPWRWQPHLQDQELLKNPSFMPFGGGARLCPGMHLAKMELALFLHNFVTKFRWEALQDDKISYFPFPRLIKGLPIRLRLRE.

The helical transmembrane segment at 14–34 (WLVGLLCLVLGFLLLQLYKLV) threads the bilayer. Cys-436 serves as a coordination point for heme.

This sequence belongs to the cytochrome P450 family. Requires heme as cofactor.

It localises to the membrane. The chain is Cytochrome P450 720B2 (CYP720B2) from Pinus taeda (Loblolly pine).